We begin with the raw amino-acid sequence, 611 residues long: Mitogen-activated protein kinase 10 (611 aa).

One can recognise a Protein kinase domain in the interval 25–316; the sequence is YKIQEVIGKG…AEEALAHPYF (292 aa). ATP-binding positions include 31 to 39 and Lys-54; that span reads IGKGSYGVV. The Proton acceptor role is filled by Asp-151. At Thr-187 the chain carries Phosphothreonine. Residues 187–189 carry the TXY motif; the sequence is TDY. Tyr-189 is modified (phosphotyrosine). The segment at 394–481 is disordered; the sequence is ENGGNGPVIP…RVVGPVLPYE (88 aa). Over residues 426–439 the composition is skewed to basic and acidic residues; that stretch reads EQPRIGPSRDKPSD.

It belongs to the protein kinase superfamily. CMGC Ser/Thr protein kinase family. MAP kinase subfamily. In terms of processing, dually phosphorylated on Thr-187 and Tyr-189, which activates the enzyme.

It catalyses the reaction L-seryl-[protein] + ATP = O-phospho-L-seryl-[protein] + ADP + H(+). It carries out the reaction L-threonyl-[protein] + ATP = O-phospho-L-threonyl-[protein] + ADP + H(+). Its activity is regulated as follows. Activated by threonine and tyrosine phosphorylation. This is Mitogen-activated protein kinase 10 (MPK10) from Oryza sativa subsp. japonica (Rice).